A 307-amino-acid polypeptide reads, in one-letter code: uncharacterized protein (307 aa).

Residues 5–233 (VQTNGLTKTY…NTEYIELVTP (229 aa)) form the ABC transporter domain. 37-44 (GPNGAGKT) contributes to the ATP binding site.

The protein belongs to the ABC transporter superfamily.

This is an uncharacterized protein from Bacillus subtilis (strain 168).